The following is a 608-amino-acid chain: Prolactin receptor (608 aa).

A signal peptide spans 1-19 (MSSALAYMLLVLSISLLNG). At 20–229 (QSPPGKPEIH…EIPNDFTLKD (210 aa)) the chain is on the extracellular side. 2 Fibronectin type-III domains span residues 22–122 (PPGK…IVEP) and 124–224 (PPRN…IPND). Cys-31 and Cys-41 are disulfide-bonded. Asn-54 is a glycosylation site (N-linked (GlcNAc...) asparagine). Cys-70 and Cys-81 form a disulfide bridge. N-linked (GlcNAc...) asparagine glycans are attached at residues Asn-99 and Asn-127. The Zn(2+) site is built by Asp-206 and His-207. The WSXWS motif signature appears at 210–214 (WSRWG). Residues 230 to 253 (TTVWIIVAVLSAVICLIMVWAVAL) traverse the membrane as a helical segment. Over 254 to 608 (KGYSMMTCIF…DPTCFMHSFH (355 aa)) the chain is Cytoplasmic. A Box 1 motif motif is present at residues 262-270 (IFPPVPGPK). Disordered stretches follow at residues 317 to 355 (DERL…HSLL), 377 to 419 (KPEN…TRRS), and 466 to 487 (GAKS…EKGP). A compositionally biased stretch (basic and acidic residues) spans 318–327 (ERLMPSHSKE). Positions 345 to 354 (GHGSYDSHSL) are enriched in low complexity. Over residues 398-408 (CHTDTSKSTTW) the composition is skewed to polar residues.

The protein belongs to the type I cytokine receptor family. Type 1 subfamily. In terms of assembly, interacts with SMARCA1. Interacts with NEK3 and VAV2 and this interaction is prolactin-dependent.

Its subcellular location is the membrane. Its function is as follows. This is a receptor for the anterior pituitary hormone prolactin. The protein is Prolactin receptor (Prlr) of Mus musculus (Mouse).